The sequence spans 116 residues: Large ribosomal subunit protein uL24c (116 aa).

It belongs to the universal ribosomal protein uL24 family. As to quaternary structure, part of the 50S ribosomal subunit.

The protein localises to the plastid. It localises to the chloroplast. Functionally, one of two assembly initiator proteins, it binds directly to the 5'-end of the 23S rRNA, where it nucleates assembly of the 50S subunit. The protein is Large ribosomal subunit protein uL24c (rpl24) of Pyropia yezoensis (Susabi-nori).